The following is a 747-amino-acid chain: AT-rich interactive domain-containing protein 4 (747 aa).

Positions 454-475 are disordered; sequence PLPTRKRSEPCRESKEIENGGP. Basic and acidic residues predominate over residues 459–471; that stretch reads KRSEPCRESKEIE. One can recognise an ARID domain in the interval 566-670; the sequence is VCSEEEFLRD…YLLEYEYAHD (105 aa). The PHD-type zinc finger occupies 674–730; it reads GECCLICRSSTAGDWVNCGSCGEWAHFGCDRRPGLGAFKDYAKTDGLEYVCPNCSVS.

It is found in the nucleus. This is AT-rich interactive domain-containing protein 4 (ARID4) from Arabidopsis thaliana (Mouse-ear cress).